The following is a 203-amino-acid chain: Enterotoxin-like toxin X (203 aa).

The interval 164 to 180 (YTLESHKELQKNRENVE) is sialic acid-binding motif.

The protein belongs to the staphylococcal/streptococcal toxin family.

Its subcellular location is the secreted. Plays a role in the inhibition of the host innate immune system. Inhibits phagocytosis and killing by human neutrophils by interacting with multiple neutrophil surface glycoproteins in a sialic acid-dependent manner. The polypeptide is Enterotoxin-like toxin X (Staphylococcus aureus).